The chain runs to 209 residues: Orotate phosphoribosyltransferase (209 aa).

5-phospho-alpha-D-ribose 1-diphosphate-binding positions include arginine 96, lysine 100, histidine 102, and 122 to 130 (EDLISTGGS). Serine 126 is a binding site for orotate.

It belongs to the purine/pyrimidine phosphoribosyltransferase family. PyrE subfamily. In terms of assembly, homodimer. It depends on Mg(2+) as a cofactor.

The enzyme catalyses orotidine 5'-phosphate + diphosphate = orotate + 5-phospho-alpha-D-ribose 1-diphosphate. The protein operates within pyrimidine metabolism; UMP biosynthesis via de novo pathway; UMP from orotate: step 1/2. In terms of biological role, catalyzes the transfer of a ribosyl phosphate group from 5-phosphoribose 1-diphosphate to orotate, leading to the formation of orotidine monophosphate (OMP). The sequence is that of Orotate phosphoribosyltransferase from Listeria innocua serovar 6a (strain ATCC BAA-680 / CLIP 11262).